Reading from the N-terminus, the 365-residue chain is Caffeic acid 3-O-methyltransferase (365 aa).

Asn-131 lines the (E)-ferulate pocket. 6 residues coordinate S-adenosyl-L-homocysteine: Gly-208, Asp-231, Asp-251, Met-252, Met-264, and Lys-265. Catalysis depends on His-269, which acts as the Proton acceptor. Asp-270 serves as a coordination point for (E)-5-hydroxyferulate. Active-site residues include Glu-297 and Glu-329.

It belongs to the class I-like SAM-binding methyltransferase superfamily. Cation-independent O-methyltransferase family. COMT subfamily. Homodimer. In terms of tissue distribution, more abundant in roots and stems.

The catalysed reaction is (E)-caffeate + S-adenosyl-L-methionine = (E)-ferulate + S-adenosyl-L-homocysteine + H(+). It carries out the reaction (E)-5-hydroxyferulate + S-adenosyl-L-methionine = (E)-sinapate + S-adenosyl-L-homocysteine + H(+). The protein operates within aromatic compound metabolism; phenylpropanoid biosynthesis. Functionally, catalyzes the conversion of caffeic acid to ferulic acid and of 5-hydroxyferulic acid to sinapic acid. The resulting products may subsequently be converted to the corresponding alcohols that are incorporated into lignins. In Medicago sativa (Alfalfa), this protein is Caffeic acid 3-O-methyltransferase.